A 592-amino-acid polypeptide reads, in one-letter code: Transducer of Cdc42-dependent actin assembly protein 1 homolog (592 aa).

The 265-residue stretch at 3–267 folds into the F-BAR domain; the sequence is DSCSWDQLWD…DIGLIDPSRD (265 aa). Disordered stretches follow at residues 343 to 366 and 447 to 519; these read FGGG…QQRA and SATS…DELY. The 78-residue stretch at 359-436 folds into the REM-1 domain; it reads TLPPQQRARK…IQKFKILLDD (78 aa). Residues 363–441 are a coiled coil; sequence QQRARKIAGK…ILLDDVNAQL (79 aa). Residues 447-457 are compositionally biased toward polar residues; it reads SATSVGGSDTP. The span at 459–474 shows a compositional bias: low complexity; that stretch reads SIRSVSSASSGVTSRV. Positions 495–510 are enriched in polar residues; that stretch reads FSGSNGGSDTDPTING. The region spanning 527–589 is the SH3 domain; sequence PVLGEAIAQF…PSSYLKVTWF (63 aa).

Belongs to the FNBP1 family. Interacts (via SH3 domain) with wsp-1. Interacts with cdc-42 and (via SH3 domain) with wve-1. In terms of tissue distribution, expressed in the germline and specifically in the gonads.

Its subcellular location is the cell junction. The protein resides in the apical cell membrane. It localises to the basolateral cell membrane. It is found in the cytoplasmic vesicle. The protein localises to the cytoplasm. Its subcellular location is the perinuclear region. The protein resides in the recycling endosome. Its function is as follows. Plays a role in protein trafficking, actin organization and embryonic morphogenesis. Potentially acts as a cdc-42 effector. May play a role in hypodermal P-cell nuclear positioning. Together with toca-2, is required for protein trafficking regulating yolk protein clathrin-mediated endocytosis by oocytes during oogenesis and retrograde recycling and the sorting of recycling endosome cargo proteins such as mig-14. Also, together with toca-2, controls the distribution of actin at cell junctions. This Caenorhabditis elegans protein is Transducer of Cdc42-dependent actin assembly protein 1 homolog.